Here is a 161-residue protein sequence, read N- to C-terminus: Cyclin-dependent protein kinase inhibitor SMR12 (161 aa).

The segment covering 84–93 has biased composition (acidic residues); it reads EEEEVVEEEN. The disordered stretch occupies residues 84–106; it reads EEEEVVEEENDGFKTPTRPENRI.

In terms of biological role, probable cyclin-dependent protein kinase (CDK) inhibitor that functions as a repressor of mitosis in the endoreduplication cell cycle. This Arabidopsis thaliana (Mouse-ear cress) protein is Cyclin-dependent protein kinase inhibitor SMR12.